Here is a 245-residue protein sequence, read N- to C-terminus: D-aminoacyl-tRNA deacylase (245 aa).

It belongs to the DtdA deacylase family. Monomer. The cofactor is Zn(2+).

It catalyses the reaction a D-aminoacyl-tRNA + H2O = a tRNA + a D-alpha-amino acid + H(+). The enzyme catalyses glycyl-tRNA(Ala) + H2O = tRNA(Ala) + glycine + H(+). D-aminoacyl-tRNA deacylase with broad substrate specificity. By recycling D-aminoacyl-tRNA to D-amino acids and free tRNA molecules, this enzyme counteracts the toxicity associated with the formation of D-aminoacyl-tRNA entities in vivo. In Ignicoccus hospitalis (strain KIN4/I / DSM 18386 / JCM 14125), this protein is D-aminoacyl-tRNA deacylase.